Consider the following 622-residue polypeptide: Elongation factor 4 (622 aa).

The 185-residue stretch at 17-201 (ALIRNFCIIA…KVVAEVPAPV (185 aa)) folds into the tr-type G domain. GTP contacts are provided by residues 29–34 (DHGKST) and 148–151 (NKID).

Belongs to the TRAFAC class translation factor GTPase superfamily. Classic translation factor GTPase family. LepA subfamily.

It is found in the cell membrane. The catalysed reaction is GTP + H2O = GDP + phosphate + H(+). In terms of biological role, required for accurate and efficient protein synthesis under certain stress conditions. May act as a fidelity factor of the translation reaction, by catalyzing a one-codon backward translocation of tRNAs on improperly translocated ribosomes. Back-translocation proceeds from a post-translocation (POST) complex to a pre-translocation (PRE) complex, thus giving elongation factor G a second chance to translocate the tRNAs correctly. Binds to ribosomes in a GTP-dependent manner. This Streptomyces avermitilis (strain ATCC 31267 / DSM 46492 / JCM 5070 / NBRC 14893 / NCIMB 12804 / NRRL 8165 / MA-4680) protein is Elongation factor 4.